A 291-amino-acid polypeptide reads, in one-letter code: Transcription initiation factor IIE subunit beta (291 aa).

Methionine 1 bears the N-acetylmethionine mark. The segment covering 1–13 has biased composition (basic and acidic residues); it reads MDPSLLRERELFK. Positions 1–63 are disordered; it reads MDPSLLRERE…NSDHSNGSFN (63 aa). Residues 50–62 are compositionally biased toward polar residues; that stretch reads GSKQNSDHSNGSF. Position 61 is a phosphoserine (serine 61). The TFIIE beta DNA-binding region spans 66–146; that stretch reads ALSGSSGYKF…YAFKPKYNVR (81 aa). N6-acetyllysine is present on lysine 74. Positions 243-272 are disordered; sequence SSMQESGPKKVAPIQRRKKPASQKKRRFKT. Over residues 257-271 the composition is skewed to basic residues; the sequence is QRRKKPASQKKRRFK.

Belongs to the TFIIE beta subunit family. As to quaternary structure, tetramer of two alpha and two beta chains. Interacts with FACT subunit SUPT16H. Interacts with ATF7IP. Interacts with SND1. Part of TBP-based Pol II pre-initiation complex (PIC), in which Pol II core assembles with general transcription factors and other specific initiation factors including GTF2E1, GTF2E2, GTF2F1, GTF2F2, TCEA1, ERCC2, ERCC3, GTF2H2, GTF2H3, GTF2H4, GTF2H5, GTF2A1, GTF2A2, GTF2B and TBP; this large multi-subunit PIC complex mediates DNA unwinding and targets Pol II core to the transcription start site where the first phosphodiester bond forms.

It localises to the nucleus. Its function is as follows. Recruits TFIIH to the initiation complex and stimulates the RNA polymerase II C-terminal domain kinase and DNA-dependent ATPase activities of TFIIH. Both TFIIH and TFIIE are required for promoter clearance by RNA polymerase. The protein is Transcription initiation factor IIE subunit beta (GTF2E2) of Homo sapiens (Human).